A 480-amino-acid chain; its full sequence is Aspartyl/glutamyl-tRNA(Asn/Gln) amidotransferase subunit B (480 aa).

The protein belongs to the GatB/GatE family. GatB subfamily. In terms of assembly, heterotrimer of A, B and C subunits.

It catalyses the reaction L-glutamyl-tRNA(Gln) + L-glutamine + ATP + H2O = L-glutaminyl-tRNA(Gln) + L-glutamate + ADP + phosphate + H(+). It carries out the reaction L-aspartyl-tRNA(Asn) + L-glutamine + ATP + H2O = L-asparaginyl-tRNA(Asn) + L-glutamate + ADP + phosphate + 2 H(+). Allows the formation of correctly charged Asn-tRNA(Asn) or Gln-tRNA(Gln) through the transamidation of misacylated Asp-tRNA(Asn) or Glu-tRNA(Gln) in organisms which lack either or both of asparaginyl-tRNA or glutaminyl-tRNA synthetases. The reaction takes place in the presence of glutamine and ATP through an activated phospho-Asp-tRNA(Asn) or phospho-Glu-tRNA(Gln). In Streptococcus agalactiae serotype Ia (strain ATCC 27591 / A909 / CDC SS700), this protein is Aspartyl/glutamyl-tRNA(Asn/Gln) amidotransferase subunit B.